We begin with the raw amino-acid sequence, 595 residues long: Leiomodin-1 (595 aa).

Disordered stretches follow at residues 1 to 322 and 467 to 568; these read MSKV…KVKN and DKQR…QEKN. Ser-12 carries the phosphoserine modification. Residues 27–40 show a composition bias toward acidic residues; sequence EEMEELEKELDVVD. Composition is skewed to basic and acidic residues over residues 72-105, 117-127, 134-193, 201-224, 232-251, 259-289, 467-476, and 484-493; these read CEKE…EDKG, QDSDVGKEPKK, FSRD…EKTG, SRDK…KLTA, RQED…KPEV, RDSR…REKQ, DKQRQKRLQE, and SGEKKDRLEV. At Ser-85 the chain carries Phosphoserine. Phosphoserine is present on Ser-135. Repeat copies occupy residues 165 to 180, 181 to 196, 197 to 212, 213 to 227, 228 to 243, 244 to 257, 258 to 273, and 274 to 288. Residues 165 to 288 are 8 X approximate tandem repeats; it reads AAVDRKEAGK…VREEGKTREK (124 aa). Pro residues-rich tracts occupy residues 503 to 513 and 527 to 538; these read SPKPSPQPSPK and AAPPPPPPPLAP. Residues 503–522 form a 5 X 4 AA approximate tandem repeats region; sequence SPKPSPQPSPKSAPKNSPKK. Ser-550 carries the post-translational modification Phosphoserine. One can recognise a WH2 domain in the interval 569–588; it reads SRDQLLAAIRSSNLKQLKKV.

In terms of tissue distribution, detected in smooth muscle, in stomach and uterus, blood vessel wall, and in slow fibers in extraocular muscle, urinary bladder and sternothyroid muscle (at protein level).

It is found in the cytoplasm. The protein localises to the myofibril. Its subcellular location is the sarcomere. It localises to the cytoskeleton. Functionally, required for proper contractility of visceral smooth muscle cells. Mediates nucleation of actin filaments. The sequence is that of Leiomodin-1 from Rattus norvegicus (Rat).